Here is a 20-residue protein sequence, read N- to C-terminus: Haemoporin (20 aa).

The segment at 1 to 20 (AAVPEAAAEATAEAAPVSEF) is disordered.

As to quaternary structure, homopentamer. Forms a cylindrical structure with a central pore. As to expression, detected in the hemolymph.

The protein localises to the secreted. This chain is Haemoporin, found in Aplysia californica (California sea hare).